A 259-amino-acid chain; its full sequence is Transmembrane protein 81 (259 aa).

Positions 1-18 are cleaved as a signal peptide; sequence MALSTLWLVLMLWTSLFS. At 19-221 the chain is on the extracellular side; that stretch reads DSQCSTLSQA…KVYSSSTIRN (203 aa). An Ig-like domain is found at 97-172; it reads GRRLVLDCLE…VLDTGKRRVK (76 aa). A disulfide bond links C104 and C161. A helical membrane pass occupies residues 222 to 242; the sequence is IVIISVPLSFAIAVVIFIFLF. The Cytoplasmic portion of the chain corresponds to 243-259; it reads CYSRRARRAAHLCQDNI.

In terms of assembly, forms a complex with izumo1 and spaca6 on spermatocyte cell membrane. The complex binds to oocyte protein bncr. Expressed in sperm.

It is found in the cell membrane. Essential fertilization factor required for male fertility. Part of a conserved trimeric sperm complex with the essential fertilization factors IZUMO1 and SPACA6 which bridges sperm and oocyte membranes during fertilization by binding to IZUMO1R/JUNO on the oocyte. In Danio rerio (Zebrafish), this protein is Transmembrane protein 81.